The following is a 588-amino-acid chain: Cyclomaltodextrinase (588 aa).

The substrate site is built by His-247 and Arg-326. The active-site Nucleophile is Asp-328. The active-site Proton donor is the Glu-357. Residues 423–424, Asp-468, and Arg-472 each bind substrate; that span reads HD.

Belongs to the glycosyl hydrolase 13 family. As to quaternary structure, exists as a monomer or a homodimer in solution. Homodimer is more active and stable than the monomer.

The enzyme catalyses cyclomaltodextrin + H2O = linear maltodextrin. With respect to regulation, no metal dependence, but Mn(2+) increases the activity with alpha-cyclodextrin as substrate. No effect on the activity with presence or absence of Ca(2+), Zn(2+), Tween-20 or EDTA. In terms of biological role, hydrolyzes alpha-, beta- and gamma-cyclodextrins with the highest activity with alpha-cyclodextrin (cyclomaltohexaose). Pullulan is the preferred substrate from linear substrates. Maltose is a major product of these reactions. Is also able to hydrolyze maltotriose and acarbose, and transglycosylate their hydrolytic products. Major reaction products of maltotriose and of acarbose are maltose and glucose, and glucose and pseudotrisaccharide, respectively. No activity with glucose or maltose as substrate. This Geobacillus thermopakistaniensis (strain MAS1) protein is Cyclomaltodextrinase.